Consider the following 264-residue polypeptide: S-adenosylmethionine decarboxylase proenzyme (264 aa).

The Schiff-base intermediate with substrate; via pyruvic acid role is filled by Ser112. Residue Ser112 is modified to Pyruvic acid (Ser); by autocatalysis. His117 (proton acceptor; for processing activity) is an active-site residue. Cys140 functions as the Proton donor; for catalytic activity in the catalytic mechanism.

It belongs to the prokaryotic AdoMetDC family. Type 2 subfamily. Heterooctamer of four alpha and four beta chains arranged as a tetramer of alpha/beta heterodimers. The cofactor is pyruvate. Post-translationally, is synthesized initially as an inactive proenzyme. Formation of the active enzyme involves a self-maturation process in which the active site pyruvoyl group is generated from an internal serine residue via an autocatalytic post-translational modification. Two non-identical subunits are generated from the proenzyme in this reaction, and the pyruvate is formed at the N-terminus of the alpha chain, which is derived from the carboxyl end of the proenzyme. The post-translation cleavage follows an unusual pathway, termed non-hydrolytic serinolysis, in which the side chain hydroxyl group of the serine supplies its oxygen atom to form the C-terminus of the beta chain, while the remainder of the serine residue undergoes an oxidative deamination to produce ammonia and the pyruvoyl group blocking the N-terminus of the alpha chain.

It carries out the reaction S-adenosyl-L-methionine + H(+) = S-adenosyl 3-(methylsulfanyl)propylamine + CO2. It functions in the pathway amine and polyamine biosynthesis; S-adenosylmethioninamine biosynthesis; S-adenosylmethioninamine from S-adenosyl-L-methionine: step 1/1. Functionally, catalyzes the decarboxylation of S-adenosylmethionine to S-adenosylmethioninamine (dcAdoMet), the propylamine donor required for the synthesis of the polyamines spermine and spermidine from the diamine putrescine. This is S-adenosylmethionine decarboxylase proenzyme from Serratia proteamaculans (strain 568).